The chain runs to 119 residues: Large ribosomal subunit protein uL18 (119 aa).

The protein belongs to the universal ribosomal protein uL18 family. Part of the 50S ribosomal subunit; part of the 5S rRNA/L5/L18/L25 subcomplex. Contacts the 5S and 23S rRNAs.

Functionally, this is one of the proteins that bind and probably mediate the attachment of the 5S RNA into the large ribosomal subunit, where it forms part of the central protuberance. This is Large ribosomal subunit protein uL18 from Borrelia duttonii (strain Ly).